The following is a 515-amino-acid chain: Bifunctional purine biosynthesis protein PurH (515 aa).

An MGS-like domain is found at 1–145; sequence MTKRVLISVS…KNHASVTVVV (145 aa).

This sequence belongs to the PurH family.

It carries out the reaction (6R)-10-formyltetrahydrofolate + 5-amino-1-(5-phospho-beta-D-ribosyl)imidazole-4-carboxamide = 5-formamido-1-(5-phospho-D-ribosyl)imidazole-4-carboxamide + (6S)-5,6,7,8-tetrahydrofolate. It catalyses the reaction IMP + H2O = 5-formamido-1-(5-phospho-D-ribosyl)imidazole-4-carboxamide. It functions in the pathway purine metabolism; IMP biosynthesis via de novo pathway; 5-formamido-1-(5-phospho-D-ribosyl)imidazole-4-carboxamide from 5-amino-1-(5-phospho-D-ribosyl)imidazole-4-carboxamide (10-formyl THF route): step 1/1. Its pathway is purine metabolism; IMP biosynthesis via de novo pathway; IMP from 5-formamido-1-(5-phospho-D-ribosyl)imidazole-4-carboxamide: step 1/1. This Streptococcus pneumoniae (strain Taiwan19F-14) protein is Bifunctional purine biosynthesis protein PurH.